A 480-amino-acid polypeptide reads, in one-letter code: UDP-N-acetylmuramate--L-alanine ligase (480 aa).

Gly115 to Thr121 contacts ATP.

Belongs to the MurCDEF family.

Its subcellular location is the cytoplasm. The catalysed reaction is UDP-N-acetyl-alpha-D-muramate + L-alanine + ATP = UDP-N-acetyl-alpha-D-muramoyl-L-alanine + ADP + phosphate + H(+). It participates in cell wall biogenesis; peptidoglycan biosynthesis. In terms of biological role, cell wall formation. The protein is UDP-N-acetylmuramate--L-alanine ligase of Gluconacetobacter diazotrophicus (strain ATCC 49037 / DSM 5601 / CCUG 37298 / CIP 103539 / LMG 7603 / PAl5).